The following is a 429-amino-acid chain: Histidine--tRNA ligase (429 aa).

It belongs to the class-II aminoacyl-tRNA synthetase family. Homodimer.

It is found in the cytoplasm. It catalyses the reaction tRNA(His) + L-histidine + ATP = L-histidyl-tRNA(His) + AMP + diphosphate + H(+). This chain is Histidine--tRNA ligase, found in Streptococcus pneumoniae (strain P1031).